Consider the following 2313-residue polypeptide: Cell surface glycoprotein 1 (2313 aa).

Residues 1–28 (MKRKNKVLSILLTLLLIISTTSVNMSFA) form the signal peptide. 2 consecutive Cohesin domains span residues 34–197 (IEMV…VVEA) and 205–367 (VALE…EIVV). Residues 369–378 (GEEPGEEPTE) show a composition bias toward acidic residues. The tract at residues 369-400 (GEEPGEEPTEEPVPTETSVDPTPTVTEEPVPS) is disordered. The span at 380–400 (PVPTETSVDPTPTVTEEPVPS) shows a compositional bias: low complexity. A Cohesin 3 domain is found at 407 to 569 (VIMELDKTKV…SVVQPGEIVV (163 aa)). The segment covering 571 to 580 (GEEPGEEPTE) has biased composition (acidic residues). The tract at residues 571–602 (GEEPGEEPTEEPVPTETSVDPTPTVTEEPVPS) is disordered. The segment covering 582–602 (PVPTETSVDPTPTVTEEPVPS) has biased composition (low complexity). One can recognise a Cohesin 4 domain in the interval 609-771 (VIMELDKTKV…SVVQPGEIVA (163 aa)). Residues 772–782 (EGEEPGEEPTE) are compositionally biased toward acidic residues. The segment at 772-805 (EGEEPGEEPTEEPVPTETSADPTPTVTEEPVPSE) is disordered. The segment covering 784-803 (PVPTETSADPTPTVTEEPVP) has biased composition (low complexity). The Cohesin 5 domain occupies 811-973 (VIMELDKTKV…SVVQPGEIVA (163 aa)). The segment covering 974-984 (EGEEPGEEPTE) has biased composition (acidic residues). The disordered stretch occupies residues 974–1007 (EGEEPGEEPTEEPVPTETPVDPTPTVTEEPVPSE). The span at 986 to 1007 (PVPTETPVDPTPTVTEEPVPSE) shows a compositional bias: low complexity. A Cohesin 6 domain is found at 1013-1175 (VIMELDKTKV…SVVQPGEIVA (163 aa)). Disordered stretches follow at residues 1177–1203 (GEEPTEEPVPTETPVDPTPTVTEEPVP) and 1374–2111 (ASDE…PDGS). Low complexity predominate over residues 1184–1203 (PVPTETPVDPTPTVTEEPVP). The Cohesin 7 domain occupies 1211–1375 (VIMELDKTKV…IQPAPIKAAS (165 aa)). The segment covering 1376 to 1390 (DEPIPTDTPSDEPTP) has biased composition (low complexity). Residues 1383–2025 (TPSDEPTPSD…SDEPTPSETP (643 aa)) form an approximate tandem repeats of T-P-S-D-E-P region. Residues 1391-1411 (SDEPTPSDEPTPSDEPTPSDE) are compositionally biased toward pro residues. The segment covering 1423-1433 (PTDTPSDEPTP) has biased composition (low complexity). The span at 1434 to 1454 (SDEPTPSDEPTPSDEPTPSDE) shows a compositional bias: pro residues. Residues 1466–1476 (PTDTPSDEPTP) are compositionally biased toward low complexity. Pro residues predominate over residues 1477–1497 (SDEPTPSDEPTPSDEPTPSDE). A compositionally biased stretch (low complexity) spans 1509–1519 (PTDTPSDEPTP). Over residues 1520–1540 (SDEPTPSDEPTPSDEPTPSDE) the composition is skewed to pro residues. Residues 1552 to 1562 (PTDTPSDEPTP) show a composition bias toward low complexity. The span at 1563-1595 (SDEPTPSDEPTPSDEPTPSDEPTPSDEPTPSDE) shows a compositional bias: pro residues. Positions 1607 to 1617 (PTDTPSDEPTP) are enriched in low complexity. Pro residues predominate over residues 1618-1650 (SDEPTPSDEPTPSDEPTPSDEPTPSDEPTPSDE). The segment covering 1662-1672 (PTDTPSDEPTP) has biased composition (low complexity). Residues 1673 to 1693 (SDEPTPSDEPTPSDEPTPSDE) are compositionally biased toward pro residues. Over residues 1705–1715 (PTDTPSDEPTP) the composition is skewed to low complexity. Pro residues predominate over residues 1716–1736 (SDEPTPSDEPTPSDEPTPSDE). Residues 1748–1758 (PTDTPSDEPTP) show a composition bias toward low complexity. Positions 1759 to 1779 (SDEPTPSDEPTPSDEPTPSDE) are enriched in pro residues. Low complexity predominate over residues 1791–1801 (PTDTPSDEPTP). A compositionally biased stretch (pro residues) spans 1802 to 1822 (SDEPTPSDEPTPSDEPTPSDE). Residues 1834–1844 (PTDTPSDEPTP) are compositionally biased toward low complexity. The segment covering 1845-1865 (SDEPTPSDEPTPSDEPTPSDE) has biased composition (pro residues). Low complexity predominate over residues 1877 to 1887 (PTDTPSDEPTP). Residues 1888 to 1908 (SDEPTPSDEPTPSDEPTPSDE) are compositionally biased toward pro residues. Positions 1920–1930 (PTDTPSDEPTP) are enriched in low complexity. Pro residues predominate over residues 1931–1963 (SDEPTPSDEPTPSDEPTPSDEPTPSDEPTPSDE). Residues 1975–1985 (PTDTPSDEPTP) are compositionally biased toward low complexity. 2 stretches are compositionally biased toward pro residues: residues 1986–2018 (SDEPTPSDEPTPSDEPTPSDEPTPSDEPTPSDE) and 2027–2039 (EPTPTTTPTPTPS). A compositionally biased stretch (gly residues) spans 2045-2062 (GSGGSGGSGGGGGGGGGT). SLH domains follow at residues 2067–2140 (PTPT…YGAQ), 2141–2204 (SASP…EIMS), and 2211–2274 (ISNP…GAPK). A compositionally biased stretch (low complexity) spans 2073 to 2082 (SKPTSTPAPT).

In terms of assembly, assembled into mono-layered crystalline arrays.

It is found in the secreted. Its subcellular location is the cell wall. The protein localises to the S-layer. The polypeptide is Cell surface glycoprotein 1 (olpB) (Acetivibrio thermocellus (strain ATCC 27405 / DSM 1237 / JCM 9322 / NBRC 103400 / NCIMB 10682 / NRRL B-4536 / VPI 7372) (Clostridium thermocellum)).